The sequence spans 171 residues: UPF0303 protein YPK_1581 (171 aa).

This sequence belongs to the UPF0303 family.

This is UPF0303 protein YPK_1581 from Yersinia pseudotuberculosis serotype O:3 (strain YPIII).